The chain runs to 159 residues: RNA pyrophosphohydrolase (159 aa).

Positions 6–149 (GYRPNVGIVI…KRNVYRRMMK (144 aa)) constitute a Nudix hydrolase domain. A Nudix box motif is present at residues 38 to 59 (GGINSGETAEQAMFRELFEEVG).

This sequence belongs to the Nudix hydrolase family. RppH subfamily. It depends on a divalent metal cation as a cofactor.

Its function is as follows. Accelerates the degradation of transcripts by removing pyrophosphate from the 5'-end of triphosphorylated RNA, leading to a more labile monophosphorylated state that can stimulate subsequent ribonuclease cleavage. The protein is RNA pyrophosphohydrolase of Baumannia cicadellinicola subsp. Homalodisca coagulata.